Here is a 217-residue protein sequence, read N- to C-terminus: Probable cytidylate kinase (217 aa).

9-17 lines the ATP pocket; that stretch reads GPAGSGKST.

Belongs to the cytidylate kinase family. Type 1 subfamily.

It catalyses the reaction CMP + ATP = CDP + ADP. The catalysed reaction is dCMP + ATP = dCDP + ADP. The protein is Probable cytidylate kinase of Vairimorpha ceranae (strain BRL01) (Microsporidian parasite).